The following is an 86-amino-acid chain: uncharacterized protein (86 aa).

The protein resides in the mitochondrion. This is an uncharacterized protein from Marchantia polymorpha (Common liverwort).